We begin with the raw amino-acid sequence, 377 residues long: Carbonic anhydrase 1 (377 aa).

Positions 1-20 (MARTGALLLVALALAGCAQA) are cleaved as a signal peptide. Residues 38-318 (DHWDHGLNGE…HHHRRLLHNH (281 aa)) form the Alpha-carbonic anhydrase domain. Disulfide bonds link C61–C264, C194–C198, and C296–C351. N101 carries N-linked (GlcNAc...) asparagine glycosylation. H112 (proton acceptor) is an active-site residue. The N-linked (GlcNAc...) asparagine glycan is linked to N135. The Zn(2+) site is built by H163, H165, and H182. Substrate is bound by residues T260 and 260 to 261 (TT). An N-linked (GlcNAc...) asparagine glycan is attached at N297.

Belongs to the alpha-carbonic anhydrase family. In terms of assembly, tetramer of two large and two small subunits linked by two disulfide bonds. It depends on Zn(2+) as a cofactor.

It is found in the periplasm. The catalysed reaction is hydrogencarbonate + H(+) = CO2 + H2O. In terms of biological role, reversible hydration of carbon dioxide. The chain is Carbonic anhydrase 1 (CAH1) from Chlamydomonas reinhardtii (Chlamydomonas smithii).